The chain runs to 829 residues: Periplasmic nitrate reductase (829 aa).

The tat-type signal signal peptide spans 1–29 (MKMTRRAFVKANAAASAAAVAGITLPASA). The region spanning 41 to 97 (ITWDKAPCRFCGTGCSVLVGTQNGKVVATQGDPEAPVNKGLNCIKGYFLSKIMYGQD) is the 4Fe-4S Mo/W bis-MGD-type domain. [4Fe-4S] cluster is bound by residues Cys-48, Cys-51, Cys-55, and Cys-83. Residues Lys-85, Gln-152, Asn-177, Cys-181, 214–221 (WGSNMAEM), 245–249 (STYYH), 264–266 (QSD), Met-374, Gln-378, Asn-484, 510–511 (SD), Lys-533, Asp-560, and 718–727 (TGRVLEHWHT) each bind Mo-bis(molybdopterin guanine dinucleotide). Phe-794 serves as a coordination point for substrate. 2 residues coordinate Mo-bis(molybdopterin guanine dinucleotide): Asn-802 and Lys-819.

This sequence belongs to the prokaryotic molybdopterin-containing oxidoreductase family. NasA/NapA/NarB subfamily. Component of the periplasmic nitrate reductase NapAB complex composed of NapA and NapB. [4Fe-4S] cluster serves as cofactor. The cofactor is Mo-bis(molybdopterin guanine dinucleotide). Post-translationally, predicted to be exported by the Tat system. The position of the signal peptide cleavage has not been experimentally proven.

Its subcellular location is the periplasm. It carries out the reaction 2 Fe(II)-[cytochrome] + nitrate + 2 H(+) = 2 Fe(III)-[cytochrome] + nitrite + H2O. Functionally, catalytic subunit of the periplasmic nitrate reductase complex NapAB. Receives electrons from NapB and catalyzes the reduction of nitrate to nitrite. In Vibrio campbellii (strain ATCC BAA-1116), this protein is Periplasmic nitrate reductase.